A 163-amino-acid chain; its full sequence is NADH-quinone oxidoreductase subunit I (163 aa).

2 consecutive 4Fe-4S ferredoxin-type domains span residues 53 to 83 (LRRY…IEAG) and 94 to 123 (VRYD…EGPN). Residues Cys-63, Cys-66, Cys-69, Cys-73, Cys-103, Cys-106, Cys-109, and Cys-113 each contribute to the [4Fe-4S] cluster site.

It belongs to the complex I 23 kDa subunit family. In terms of assembly, NDH-1 is composed of 14 different subunits. Subunits NuoA, H, J, K, L, M, N constitute the membrane sector of the complex. [4Fe-4S] cluster serves as cofactor.

It is found in the cell inner membrane. It catalyses the reaction a quinone + NADH + 5 H(+)(in) = a quinol + NAD(+) + 4 H(+)(out). NDH-1 shuttles electrons from NADH, via FMN and iron-sulfur (Fe-S) centers, to quinones in the respiratory chain. The immediate electron acceptor for the enzyme in this species is believed to be ubiquinone. Couples the redox reaction to proton translocation (for every two electrons transferred, four hydrogen ions are translocated across the cytoplasmic membrane), and thus conserves the redox energy in a proton gradient. The chain is NADH-quinone oxidoreductase subunit I from Brucella anthropi (strain ATCC 49188 / DSM 6882 / CCUG 24695 / JCM 21032 / LMG 3331 / NBRC 15819 / NCTC 12168 / Alc 37) (Ochrobactrum anthropi).